The sequence spans 96 residues: Putative pterin-4-alpha-carbinolamine dehydratase (96 aa).

It belongs to the pterin-4-alpha-carbinolamine dehydratase family.

It catalyses the reaction (4aS,6R)-4a-hydroxy-L-erythro-5,6,7,8-tetrahydrobiopterin = (6R)-L-erythro-6,7-dihydrobiopterin + H2O. The chain is Putative pterin-4-alpha-carbinolamine dehydratase from Prochlorococcus marinus (strain SARG / CCMP1375 / SS120).